The chain runs to 157 residues: ATP synthase subunit b (157 aa).

A helical membrane pass occupies residues 7-29 (LISQAIAFSLFILFTARFVWPYL).

This sequence belongs to the ATPase B chain family. F-type ATPases have 2 components, F(1) - the catalytic core - and F(0) - the membrane proton channel. F(1) has five subunits: alpha(3), beta(3), gamma(1), delta(1), epsilon(1). F(0) has three main subunits: a(1), b(2) and c(10-14). The alpha and beta chains form an alternating ring which encloses part of the gamma chain. F(1) is attached to F(0) by a central stalk formed by the gamma and epsilon chains, while a peripheral stalk is formed by the delta and b chains.

It is found in the cell inner membrane. Functionally, f(1)F(0) ATP synthase produces ATP from ADP in the presence of a proton or sodium gradient. F-type ATPases consist of two structural domains, F(1) containing the extramembraneous catalytic core and F(0) containing the membrane proton channel, linked together by a central stalk and a peripheral stalk. During catalysis, ATP synthesis in the catalytic domain of F(1) is coupled via a rotary mechanism of the central stalk subunits to proton translocation. Component of the F(0) channel, it forms part of the peripheral stalk, linking F(1) to F(0). In Nitrosomonas europaea (strain ATCC 19718 / CIP 103999 / KCTC 2705 / NBRC 14298), this protein is ATP synthase subunit b.